Reading from the N-terminus, the 1159-residue chain is Protocadherin-17 (1159 aa).

Residues methionine 1 to threonine 17 form the signal peptide. 6 consecutive Cadherin domains span residues leucine 18 to phenylalanine 132, serine 133 to phenylalanine 243, glutamate 244 to isoleucine 351, phenylalanine 353 to phenylalanine 472, threonine 473 to isoleucine 583, and glutamine 589 to valine 695. The Extracellular segment spans residues leucine 18–proline 707. A glycan (N-linked (GlcNAc...) asparagine) is linked at asparagine 22. Positions arginine 186–aspartate 188 match the Cell attachment site motif. Residues asparagine 266, asparagine 439, asparagine 453, asparagine 504, asparagine 566, and asparagine 590 are each glycosylated (N-linked (GlcNAc...) asparagine). A helical membrane pass occupies residues leucine 708–valine 728. The Cytoplasmic segment spans residues lysine 729–lysine 1159. 2 disordered regions span residues asparagine 858 to cysteine 909 and serine 1108 to serine 1132. A compositionally biased stretch (polar residues) spans glycine 867 to phenylalanine 879. 2 stretches are compositionally biased toward basic and acidic residues: residues lysine 880–serine 895 and glutamine 1120–serine 1132.

It is found in the cell membrane. Functionally, potential calcium-dependent cell-adhesion protein. The chain is Protocadherin-17 (PCDH17) from Homo sapiens (Human).